Reading from the N-terminus, the 120-residue chain is NAD(P)H-quinone oxidoreductase subunit 3 (120 aa).

3 helical membrane passes run 7–27, 64–84, and 89–109; these read YEYVLGFLLACSLIPILALTA, MFALVFVVFDVETVFLYPWAV, and LGLLAFVEALIFIAILVVALV.

The protein belongs to the complex I subunit 3 family. In terms of assembly, NDH-1 can be composed of about 15 different subunits; different subcomplexes with different compositions have been identified which probably have different functions.

Its subcellular location is the cellular thylakoid membrane. It carries out the reaction a plastoquinone + NADH + (n+1) H(+)(in) = a plastoquinol + NAD(+) + n H(+)(out). The catalysed reaction is a plastoquinone + NADPH + (n+1) H(+)(in) = a plastoquinol + NADP(+) + n H(+)(out). Functionally, NDH-1 shuttles electrons from an unknown electron donor, via FMN and iron-sulfur (Fe-S) centers, to quinones in the respiratory and/or the photosynthetic chain. The immediate electron acceptor for the enzyme in this species is believed to be plastoquinone. Couples the redox reaction to proton translocation, and thus conserves the redox energy in a proton gradient. Cyanobacterial NDH-1 also plays a role in inorganic carbon-concentration. This chain is NAD(P)H-quinone oxidoreductase subunit 3, found in Crocosphaera subtropica (strain ATCC 51142 / BH68) (Cyanothece sp. (strain ATCC 51142)).